The sequence spans 272 residues: MAAAAMRPSMGALGRISSSTPSPLRPLTQTASLSTTAALLKRHKYREARVYRDNSKHRGESAIHRSGTRWRLSMSDEPLPRPVPRNKLPAIETDPDHGLWEFFQNRTMVVNSPPEIAKHGRSWTAEELRHKSWDDLHRLWWVCAKERNRIATANWERNKSGLGFGEAEMRERDNAVRQTMRSIKHVLTERFYTWEDAVKVAEKDPEVDLTGNGPAFTPSNFLEDSDAAATEGEQQAAEATEEAVEKAEPATAATPESATIPSSQQQTDTPRL.

3 disordered regions span residues 1-29, 56-87, and 227-272; these read MAAA…PLTQ, KHRG…PRNK, and AAAT…TPRL. The segment covering 17 to 29 has biased composition (low complexity); sequence SSSTPSPLRPLTQ. Composition is skewed to low complexity over residues 227 to 238 and 249 to 259; these read AAATEGEQQAAE and PATAATPESAT. Positions 260-272 are enriched in polar residues; sequence IPSSQQQTDTPRL.

It belongs to the universal ribosomal protein uL29 family. Component of the mitochondrial large ribosomal subunit. Mature mitochondrial ribosomes consist of a small (37S) and a large (54S) subunit. The 37S subunit contains at least 33 different proteins and 1 molecule of RNA (15S). The 54S subunit contains at least 45 different proteins and 1 molecule of RNA (21S).

Its subcellular location is the mitochondrion. In Chaetomium globosum (strain ATCC 6205 / CBS 148.51 / DSM 1962 / NBRC 6347 / NRRL 1970) (Soil fungus), this protein is Large ribosomal subunit protein uL29m (MRPL4).